The following is a 291-amino-acid chain: Beta-lactamase CTX-M-4 (291 aa).

Residues 1-28 form the signal peptide; it reads MMTQSIRRSMLTVMATLPLLFSSATLHA. Ser-73 functions as the Acyl-ester intermediate in the catalytic mechanism. 237–239 serves as a coordination point for substrate; that stretch reads KTG.

Belongs to the class-A beta-lactamase family.

The enzyme catalyses a beta-lactam + H2O = a substituted beta-amino acid. In terms of biological role, has cefotaxime-hydrolyzing activity. This chain is Beta-lactamase CTX-M-4 (bla), found in Salmonella typhimurium.